We begin with the raw amino-acid sequence, 185 residues long: Elongation factor P (185 aa).

It belongs to the elongation factor P family.

It localises to the cytoplasm. It functions in the pathway protein biosynthesis; polypeptide chain elongation. Its function is as follows. Involved in peptide bond synthesis. Stimulates efficient translation and peptide-bond synthesis on native or reconstituted 70S ribosomes in vitro. Probably functions indirectly by altering the affinity of the ribosome for aminoacyl-tRNA, thus increasing their reactivity as acceptors for peptidyl transferase. This is Elongation factor P from Limosilactobacillus reuteri (strain DSM 20016) (Lactobacillus reuteri).